The following is a 295-amino-acid chain: MNKKLEALFRENVKGKVALITGASSGIGLTIAKRIAAAGAHVLLVARTQETLEEVKAAIEQQGGQASIFPCDLTDMNAIDQLSQQIMASVDHVDFLINNAGRSIRRAVHESFDRFHDFERTMQLNYFGAVRLVLNLLPHMIKRKNGQIINISSIGVLANATRFSAYVASKAALDAFSRCLSAEVLKHKISITSIYMPLVRTPMIAPTKIYKYVPTLSPEEAADLIVYAIVKRPKRIATHLGRLASITYAIAPDINNILMSIGFNLFPSSTAALGEQEKLNLLQRAYARLFPGEHW.

21–28 contacts NADP(+); sequence TGASSGIG. Ser153 lines the substrate pocket. Tyr166 (proton acceptor) is an active-site residue.

Belongs to the short-chain dehydrogenases/reductases (SDR) family.

It catalyses the reaction hexadecanal + NADP(+) + CoA = hexadecanoyl-CoA + NADPH + H(+). In terms of biological role, catalyzes the NADPH-dependent reduction of long chain acyl-CoA (with chain lengths of 14 to 22 carbons) to the corresponding aldehyde. The polypeptide is Fatty acyl-CoA reductase (acr1) (Acinetobacter baylyi (strain ATCC 33305 / BD413 / ADP1)).